The chain runs to 118 residues: Basic phospholipase A2 PA-10A (118 aa).

Disulfide bonds link Cys-11–Cys-71, Cys-27–Cys-117, Cys-29–Cys-45, Cys-44–Cys-98, Cys-51–Cys-91, Cys-60–Cys-84, and Cys-78–Cys-89. The Ca(2+) site is built by Tyr-28, Gly-30, and Gly-32. Residue His-48 is part of the active site. Asp-49 lines the Ca(2+) pocket. Asp-92 is an active-site residue.

Belongs to the phospholipase A2 family. Group I subfamily. D49 sub-subfamily. Ca(2+) is required as a cofactor. In terms of tissue distribution, expressed by the venom gland.

It is found in the secreted. The catalysed reaction is a 1,2-diacyl-sn-glycero-3-phosphocholine + H2O = a 1-acyl-sn-glycero-3-phosphocholine + a fatty acid + H(+). In terms of biological role, PLA2 catalyzes the calcium-dependent hydrolysis of the 2-acyl groups in 3-sn-phosphoglycerides. This is Basic phospholipase A2 PA-10A from Pseudechis australis (Mulga snake).